Reading from the N-terminus, the 351-residue chain is Holliday junction branch migration complex subunit RuvB (351 aa).

Positions 1-182 (MNDRLITPDA…FGIVQRLEYY (182 aa)) are large ATPase domain (RuvB-L). Residues isoleucine 21, arginine 22, glycine 63, lysine 66, threonine 67, threonine 68, 129-131 (EDF), arginine 172, tyrosine 182, and arginine 219 each bind ATP. Threonine 67 contacts Mg(2+). Positions 183–253 (NVADLSGIVK…VAHAAMELLN (71 aa)) are small ATPAse domain (RuvB-S). A head domain (RuvB-H) region spans residues 256–351 (RNGFDEQDRR…QDAPPVGRER (96 aa)). DNA-binding residues include arginine 292, arginine 311, and arginine 316. A disordered region spans residues 328-351 (LNPPRQPDTSPDLFQDAPPVGRER).

This sequence belongs to the RuvB family. As to quaternary structure, homohexamer. Forms an RuvA(8)-RuvB(12)-Holliday junction (HJ) complex. HJ DNA is sandwiched between 2 RuvA tetramers; dsDNA enters through RuvA and exits via RuvB. An RuvB hexamer assembles on each DNA strand where it exits the tetramer. Each RuvB hexamer is contacted by two RuvA subunits (via domain III) on 2 adjacent RuvB subunits; this complex drives branch migration. In the full resolvosome a probable DNA-RuvA(4)-RuvB(12)-RuvC(2) complex forms which resolves the HJ.

It is found in the cytoplasm. It carries out the reaction ATP + H2O = ADP + phosphate + H(+). Its function is as follows. The RuvA-RuvB-RuvC complex processes Holliday junction (HJ) DNA during genetic recombination and DNA repair, while the RuvA-RuvB complex plays an important role in the rescue of blocked DNA replication forks via replication fork reversal (RFR). RuvA specifically binds to HJ cruciform DNA, conferring on it an open structure. The RuvB hexamer acts as an ATP-dependent pump, pulling dsDNA into and through the RuvAB complex. RuvB forms 2 homohexamers on either side of HJ DNA bound by 1 or 2 RuvA tetramers; 4 subunits per hexamer contact DNA at a time. Coordinated motions by a converter formed by DNA-disengaged RuvB subunits stimulates ATP hydrolysis and nucleotide exchange. Immobilization of the converter enables RuvB to convert the ATP-contained energy into a lever motion, pulling 2 nucleotides of DNA out of the RuvA tetramer per ATP hydrolyzed, thus driving DNA branch migration. The RuvB motors rotate together with the DNA substrate, which together with the progressing nucleotide cycle form the mechanistic basis for DNA recombination by continuous HJ branch migration. Branch migration allows RuvC to scan DNA until it finds its consensus sequence, where it cleaves and resolves cruciform DNA. The sequence is that of Holliday junction branch migration complex subunit RuvB from Alkalilimnicola ehrlichii (strain ATCC BAA-1101 / DSM 17681 / MLHE-1).